The chain runs to 214 residues: Adenylate kinase (214 aa).

10–15 (GAGKGT) is an ATP binding site. An NMP region spans residues 30-59 (STGDIFRANIKGNTPLGQKAKEYMDKGELV). AMP-binding positions include T31, R36, 57 to 59 (ELV), 85 to 88 (GFPR), and Q92. The segment at 126–163 (GRRVCTNCGATYNVVFNPTKVEGICDVCNSPVIQRADD) is LID. R127 lines the ATP pocket. Positions 130 and 133 each coordinate Zn(2+). 136–137 (TY) serves as a coordination point for ATP. Residues C150 and C153 each contribute to the Zn(2+) site. The AMP site is built by R160 and R171. G199 contacts ATP.

The protein belongs to the adenylate kinase family. In terms of assembly, monomer.

The protein localises to the cytoplasm. It carries out the reaction AMP + ATP = 2 ADP. It functions in the pathway purine metabolism; AMP biosynthesis via salvage pathway; AMP from ADP: step 1/1. Functionally, catalyzes the reversible transfer of the terminal phosphate group between ATP and AMP. Plays an important role in cellular energy homeostasis and in adenine nucleotide metabolism. The chain is Adenylate kinase from Ruminiclostridium cellulolyticum (strain ATCC 35319 / DSM 5812 / JCM 6584 / H10) (Clostridium cellulolyticum).